The sequence spans 324 residues: Phospho-N-acetylmuramoyl-pentapeptide-transferase (324 aa).

10 consecutive transmembrane segments (helical) span residues 5 to 25 (GLLV…PLFI), 52 to 72 (PTMG…IMAI), 77 to 97 (LGAE…IGFL), 122 to 142 (VIAI…YIMI), 149 to 169 (FELG…GSNA), 176 to 196 (LDGL…IIAV), 201 to 221 (FGVA…LVFN), 227 to 247 (VFMG…VAIL), 253 to 273 (LLVI…IQVI), and 302 to 322 (VVVT…YIGV).

It belongs to the glycosyltransferase 4 family. MraY subfamily. It depends on Mg(2+) as a cofactor.

The protein localises to the cell membrane. It catalyses the reaction UDP-N-acetyl-alpha-D-muramoyl-L-alanyl-gamma-D-glutamyl-meso-2,6-diaminopimeloyl-D-alanyl-D-alanine + di-trans,octa-cis-undecaprenyl phosphate = di-trans,octa-cis-undecaprenyl diphospho-N-acetyl-alpha-D-muramoyl-L-alanyl-D-glutamyl-meso-2,6-diaminopimeloyl-D-alanyl-D-alanine + UMP. Its pathway is cell wall biogenesis; peptidoglycan biosynthesis. Its function is as follows. Catalyzes the initial step of the lipid cycle reactions in the biosynthesis of the cell wall peptidoglycan: transfers peptidoglycan precursor phospho-MurNAc-pentapeptide from UDP-MurNAc-pentapeptide onto the lipid carrier undecaprenyl phosphate, yielding undecaprenyl-pyrophosphoryl-MurNAc-pentapeptide, known as lipid I. The sequence is that of Phospho-N-acetylmuramoyl-pentapeptide-transferase from Bacillus cereus (strain AH820).